We begin with the raw amino-acid sequence, 573 residues long: Acetolactate synthase large subunit (573 aa).

Glutamate 51 is a thiamine diphosphate binding site. FAD is bound by residues arginine 153, 261 to 282 (HGTLEANTAMHESDLILGIGVR), and 304 to 323 (DIDPTSISKNVPVAIPIVGN). The tract at residues 396–476 (QHQMFAALHY…VVIICLNNHF (81 aa)) is thiamine pyrophosphate binding. Mg(2+) contacts are provided by aspartate 447 and asparagine 474.

It belongs to the TPP enzyme family. In terms of assembly, dimer of large and small chains. It depends on Mg(2+) as a cofactor. Requires thiamine diphosphate as cofactor.

It catalyses the reaction 2 pyruvate + H(+) = (2S)-2-acetolactate + CO2. The protein operates within amino-acid biosynthesis; L-isoleucine biosynthesis; L-isoleucine from 2-oxobutanoate: step 1/4. Its pathway is amino-acid biosynthesis; L-valine biosynthesis; L-valine from pyruvate: step 1/4. The protein is Acetolactate synthase large subunit (ilvI) of Haemophilus influenzae (strain ATCC 51907 / DSM 11121 / KW20 / Rd).